Reading from the N-terminus, the 345-residue chain is Protein-glutamate methylesterase/protein-glutamine glutaminase 2 (345 aa).

Positions 1–116 constitute a Response regulatory domain; it reads MVVDDSAVVR…KQFLVDASDD (116 aa). Residue aspartate 50 is modified to 4-aspartylphosphate. Residues 154-345 enclose the CheB-type methylesterase domain; the sequence is LQTTERVVAL…AREIMAQMAG (192 aa). Active-site residues include serine 166, histidine 192, and aspartate 288.

This sequence belongs to the CheB family. In terms of processing, phosphorylated by CheA. Phosphorylation of the N-terminal regulatory domain activates the methylesterase activity.

It localises to the cytoplasm. The catalysed reaction is [protein]-L-glutamate 5-O-methyl ester + H2O = L-glutamyl-[protein] + methanol + H(+). It carries out the reaction L-glutaminyl-[protein] + H2O = L-glutamyl-[protein] + NH4(+). Functionally, involved in chemotaxis. Part of a chemotaxis signal transduction system that modulates chemotaxis in response to various stimuli. Catalyzes the demethylation of specific methylglutamate residues introduced into the chemoreceptors (methyl-accepting chemotaxis proteins or MCP) by CheR. Also mediates the irreversible deamidation of specific glutamine residues to glutamic acid. The protein is Protein-glutamate methylesterase/protein-glutamine glutaminase 2 of Albidiferax ferrireducens (strain ATCC BAA-621 / DSM 15236 / T118) (Rhodoferax ferrireducens).